Reading from the N-terminus, the 414-residue chain is Glucose-1-phosphate adenylyltransferase (414 aa).

Alpha-D-glucose 1-phosphate contacts are provided by residues Tyr-103, Gly-168, 183 to 184 (EK), and Ser-201.

This sequence belongs to the bacterial/plant glucose-1-phosphate adenylyltransferase family. As to quaternary structure, homotetramer.

It carries out the reaction alpha-D-glucose 1-phosphate + ATP + H(+) = ADP-alpha-D-glucose + diphosphate. Its pathway is glycan biosynthesis; glycogen biosynthesis. Functionally, involved in the biosynthesis of ADP-glucose, a building block required for the elongation reactions to produce glycogen. Catalyzes the reaction between ATP and alpha-D-glucose 1-phosphate (G1P) to produce pyrophosphate and ADP-Glc. This is Glucose-1-phosphate adenylyltransferase from Thermus thermophilus (strain ATCC 27634 / DSM 579 / HB8).